The primary structure comprises 62 residues: Cecropin-D (62 aa).

Positions 1–22 (MNFTKILFFVVACVFAMRTVSA) are cleaved as a signal peptide. A propeptide spans 23-24 (AP) (removed by a dipeptidylpeptidase). At Lys-60 the chain carries Lysine amide.

Belongs to the cecropin family.

The protein localises to the secreted. In terms of biological role, cecropins have lytic and antibacterial activity against several Gram-positive and Gram-negative bacteria. The polypeptide is Cecropin-D (Hyalophora cecropia (Cecropia moth)).